The chain runs to 348 residues: Uroporphyrinogen decarboxylase (348 aa).

Substrate contacts are provided by residues Arg27–Arg31, Phe46, Asp76, Tyr152, Ser207, and His320.

This sequence belongs to the uroporphyrinogen decarboxylase family. In terms of assembly, homodimer.

Its subcellular location is the cytoplasm. The enzyme catalyses uroporphyrinogen III + 4 H(+) = coproporphyrinogen III + 4 CO2. The protein operates within porphyrin-containing compound metabolism; protoporphyrin-IX biosynthesis; coproporphyrinogen-III from 5-aminolevulinate: step 4/4. In terms of biological role, catalyzes the decarboxylation of four acetate groups of uroporphyrinogen-III to yield coproporphyrinogen-III. The sequence is that of Uroporphyrinogen decarboxylase from Bacillus mycoides (strain KBAB4) (Bacillus weihenstephanensis).